A 798-amino-acid chain; its full sequence is Interphotoreceptor matrix proteoglycan 1 (798 aa).

A signal peptide spans 1–20; it reads MNLEIKHAILVLWIFLQVQG. N142 carries an N-linked (GlcNAc...) asparagine glycan. An SEA 1 domain is found at 238–360; the sequence is SEEKVEFSIS…PEAYLTAADL (123 aa). Residues T442 and T445 are each glycosylated (O-linked (GalNAc...) threonine). In terms of domain architecture, SEA 2 spans 574–687; that stretch reads HELVVFFSLR…YSLDIEPADQ (114 aa). N595 and N619 each carry an N-linked (GlcNAc...) asparagine glycan. Residues 624 to 632 carry the Heparin- and hyaluronan-binding motif; the sequence is KQLEILSFR. N-linked (GlcNAc...) asparagine glycans are attached at residues N633 and N651. Residues 741-798 form a disordered region; sequence ASQGQATPCRPPDHSTNQARQPSVKKLQRQQNKVVKKRNSELSATDFEELDDQDWEGN. Residues 786–798 show a composition bias toward acidic residues; the sequence is DFEELDDQDWEGN.

Highly glycosylated (N- and O-linked carbohydrates and sialic acid).

The protein resides in the cell projection. Its subcellular location is the cilium. The protein localises to the photoreceptor outer segment. It localises to the secreted. It is found in the extracellular space. The protein resides in the extracellular matrix. Its subcellular location is the interphotoreceptor matrix. The protein localises to the photoreceptor inner segment. Chondroitin sulfate-, heparin- and hyaluronan-binding protein. May serve to form a basic macromolecular scaffold comprising the insoluble interphotoreceptor matrix. This Rattus norvegicus (Rat) protein is Interphotoreceptor matrix proteoglycan 1.